We begin with the raw amino-acid sequence, 112 residues long: Probable prefoldin subunit 1 (112 aa).

Belongs to the prefoldin subunit beta family. In terms of assembly, heterohexamer of two PFD-alpha type and four PFD-beta type subunits.

In terms of biological role, binds specifically to cytosolic chaperonin (c-CPN) and transfers target proteins to it. Binds to nascent polypeptide chain and promotes folding in an environment in which there are many competing pathways for nonnative proteins. This Schizosaccharomyces pombe (strain 972 / ATCC 24843) (Fission yeast) protein is Probable prefoldin subunit 1.